Consider the following 196-residue polypeptide: Ribosome maturation factor RimP (196 aa).

It belongs to the RimP family.

It localises to the cytoplasm. Its function is as follows. Required for maturation of 30S ribosomal subunits. The sequence is that of Ribosome maturation factor RimP from Dinoroseobacter shibae (strain DSM 16493 / NCIMB 14021 / DFL 12).